The chain runs to 453 residues: Glutamate--tRNA ligase 2 (453 aa).

A 'HIGH' region motif is present at residues 10 to 20 (PSPTGFLHIGG). The 'KMSKS' region motif lies at 232 to 236 (KLSKR). K235 serves as a coordination point for ATP.

The protein belongs to the class-I aminoacyl-tRNA synthetase family. Glutamate--tRNA ligase type 1 subfamily. In terms of assembly, monomer.

It is found in the cytoplasm. It catalyses the reaction tRNA(Glu) + L-glutamate + ATP = L-glutamyl-tRNA(Glu) + AMP + diphosphate. Functionally, catalyzes the attachment of glutamate to tRNA(Glu) in a two-step reaction: glutamate is first activated by ATP to form Glu-AMP and then transferred to the acceptor end of tRNA(Glu). This is Glutamate--tRNA ligase 2 from Wolbachia sp. subsp. Brugia malayi (strain TRS).